The sequence spans 121 residues: Ribosome-binding factor A (121 aa).

It belongs to the RbfA family. Monomer. Binds 30S ribosomal subunits, but not 50S ribosomal subunits or 70S ribosomes.

It localises to the cytoplasm. Its function is as follows. One of several proteins that assist in the late maturation steps of the functional core of the 30S ribosomal subunit. Associates with free 30S ribosomal subunits (but not with 30S subunits that are part of 70S ribosomes or polysomes). Required for efficient processing of 16S rRNA. May interact with the 5'-terminal helix region of 16S rRNA. This chain is Ribosome-binding factor A, found in Brevibacillus brevis (strain 47 / JCM 6285 / NBRC 100599).